Consider the following 192-residue polypeptide: ATP-dependent Clp protease proteolytic subunit 1 (192 aa).

Ser92 acts as the Nucleophile in catalysis. Residue His117 is part of the active site.

Belongs to the peptidase S14 family. As to quaternary structure, fourteen ClpP subunits assemble into 2 heptameric rings which stack back to back to give a disk-like structure with a central cavity, resembling the structure of eukaryotic proteasomes.

Its subcellular location is the cytoplasm. It carries out the reaction Hydrolysis of proteins to small peptides in the presence of ATP and magnesium. alpha-casein is the usual test substrate. In the absence of ATP, only oligopeptides shorter than five residues are hydrolyzed (such as succinyl-Leu-Tyr-|-NHMec, and Leu-Tyr-Leu-|-Tyr-Trp, in which cleavage of the -Tyr-|-Leu- and -Tyr-|-Trp bonds also occurs).. In terms of biological role, cleaves peptides in various proteins in a process that requires ATP hydrolysis. Has a chymotrypsin-like activity. Plays a major role in the degradation of misfolded proteins. In Chlamydia abortus (strain DSM 27085 / S26/3) (Chlamydophila abortus), this protein is ATP-dependent Clp protease proteolytic subunit 1.